A 200-amino-acid polypeptide reads, in one-letter code: Phospholipase A2 inhibitor LNF1 (200 aa).

An N-terminal signal peptide occupies residues 1 to 19 (MKYLHTICLLFIFVARGNS). 8 disulfides stabilise this stretch: C22–C46, C25–C32, C39–C67, C73–C94, C95–C100, C118–C143, C136–C165, and C169–C191. N176 carries an N-linked (GlcNAc...) asparagine glycan.

This sequence belongs to the CNF-like-inhibitor family. As to quaternary structure, occurs as a mixture of oligomers. Tetrameric arrangement appears to be the predominant quaternary structure. In terms of tissue distribution, expressed by the liver.

It localises to the secreted. Inhibits the enzymatic activity of phospholipase A2 (PA2). This Lachesis muta muta (Bushmaster) protein is Phospholipase A2 inhibitor LNF1.